The sequence spans 426 residues: L-ascorbate peroxidase T, chloroplastic (426 aa).

Histidine 112 acts as the Proton acceptor in catalysis. Residue histidine 241 coordinates heme b. Threonine 242 provides a ligand contact to K(+). The interval 245 to 269 (RARPDRSGWGKPETKYTKTGPGEAG) is disordered. Residues 246 to 260 (ARPDRSGWGKPETKY) show a composition bias toward basic and acidic residues. The K(+) site is built by threonine 274 and aspartate 281. The chain crosses the membrane as a helical span at residues 397–417 (YFLNIIIAIGVLVLLSTLFGG).

It belongs to the peroxidase family. Ascorbate peroxidase subfamily. Requires heme b as cofactor.

It is found in the plastid. The protein localises to the chloroplast thylakoid membrane. It catalyses the reaction L-ascorbate + H2O2 = L-dehydroascorbate + 2 H2O. Its function is as follows. Plays a key role in hydrogen peroxide removal. In Arabidopsis thaliana (Mouse-ear cress), this protein is L-ascorbate peroxidase T, chloroplastic (APXT).